The primary structure comprises 207 residues: Large ribosomal subunit protein uL4 (207 aa).

The segment at 48-75 (THSVKNRSAVRGGGRKPWRQKGTGRARQ) is disordered. A compositionally biased stretch (basic residues) spans 60 to 71 (GGRKPWRQKGTG).

This sequence belongs to the universal ribosomal protein uL4 family. As to quaternary structure, part of the 50S ribosomal subunit.

Functionally, one of the primary rRNA binding proteins, this protein initially binds near the 5'-end of the 23S rRNA. It is important during the early stages of 50S assembly. It makes multiple contacts with different domains of the 23S rRNA in the assembled 50S subunit and ribosome. Its function is as follows. Forms part of the polypeptide exit tunnel. In Staphylococcus carnosus (strain TM300), this protein is Large ribosomal subunit protein uL4.